The chain runs to 1648 residues: Cortactin-binding protein 2 (1648 aa).

5 disordered regions span residues 1 to 26 (MATDSASCEPDLSRTPGDTEGATAEA), 200 to 250 (EEKK…EEAH), 322 to 439 (PLTV…PGLN), 451 to 476 (GNANDPDQNGNNTQSPPSRDVSPTSR), and 492 to 608 (ALSR…PSID). Positions 119 to 274 (KMQERMSAQL…MEQMKKGSDG (156 aa)) form a coiled coil. Basic and acidic residues-rich tracts occupy residues 200–218 (EEKKKTSELEEQLSAEKQR) and 225–250 (QLEKQLSEFDTEREQLRAKLSREEAH). Composition is skewed to polar residues over residues 330 to 342 (STGSPLVPTNTKG) and 372 to 392 (LPSSANRIEENGPSTGNAPDL). Residues 393-415 (SNSTPSTPSSTAPAAAQTPGTAP) are compositionally biased toward low complexity. The segment covering 492-503 (ALSRFTSPQAGA) has biased composition (polar residues). The residue at position 495 (Arg-495) is an Asymmetric dimethylarginine. ANK repeat units follow at residues 699–729 (GRPTLLQQAAAQGNVTLLSMLLNEEGLDINY), 733–762 (DGHSALYSAAKNGHTDCVRLLLNAEARVDA), 766–795 (NGFTPLCVAAAQGHFECIELLTAYNANINH), 799–828 (GGQTPLYLACKNGNKECIKLLLEAGTDRSI), 832–861 (DGWTPIHAAVDTGNVDSLKLLMYHRVRAHG), and 901–931 (EGWTAAHIAASKGFKNCLEVLCRHGGLEPER). Positions 1438-1492 (SGAWRKVNTSPRKKPGHFSSPTWNKPDPKREGMRNKTIPHLNTNRNSSLSKQQSL) are disordered. Positions 1477 to 1492 (HLNTNRNSSLSKQQSL) are enriched in polar residues. Position 1510 is a phosphoserine (Ser-1510). A disordered region spans residues 1522–1648 (SMCSSKSESD…KHEQVEKPNK (127 aa)). Basic and acidic residues predominate over residues 1528–1547 (SESDISKIADSRDDLRKFDS). Composition is skewed to polar residues over residues 1548 to 1557 (SRTNPGTSAP) and 1571 to 1584 (PPSSRQTAECSNSK). Residues 1609 to 1623 (SQNTKRNSSSSNTRQ) are compositionally biased toward low complexity. Basic and acidic residues predominate over residues 1630–1648 (SKEENWTLDKHEQVEKPNK).

As to quaternary structure, interacts with CTTN/cortactin SH3 domain. Interacts with STRN, STRN4/zinedin and MOB4/phocein; this interactions mediate the association with the STRIPAK core complex and may regulate dendritic spine distribution of the STRIPAK complex in hippocampal neurons. Activation of glutamate receptors weakens the interaction with STRN and STRN4. In terms of tissue distribution, isoform 2 is predominantly expressed in brain (at protein level). In the brain, expressed at high levels in hypothalamus and striatum and at lower levels in cerebellum and cortex.

The protein resides in the cytoplasm. It localises to the cell cortex. Its subcellular location is the cell projection. The protein localises to the dendritic spine. Functionally, regulates the dendritic spine distribution of CTTN/cortactin in hippocampal neurons, and thus controls dendritic spinogenesis and dendritic spine maintenance. Associates with the striatin-interacting phosphatase and kinase (STRIPAK) core complex to regulate dendritic spine distribution of the STRIPAK complex in hippocampal neurons. This Mus musculus (Mouse) protein is Cortactin-binding protein 2 (Cttnbp2).